The chain runs to 303 residues: Ornithine carbamoyltransferase (303 aa).

Residues 53–56, Gln80, Arg104, and 131–134 contribute to the carbamoyl phosphate site; these read STRT and HPCQ. L-ornithine-binding positions include Asn162, Asp222, and 226 to 227; that span reads SM. Carbamoyl phosphate contacts are provided by residues 261–262 and Arg289; that span reads CL.

It belongs to the aspartate/ornithine carbamoyltransferase superfamily. OTCase family.

It is found in the cytoplasm. It carries out the reaction carbamoyl phosphate + L-ornithine = L-citrulline + phosphate + H(+). It functions in the pathway amino-acid biosynthesis; L-arginine biosynthesis; L-arginine from L-ornithine and carbamoyl phosphate: step 1/3. Its function is as follows. Reversibly catalyzes the transfer of the carbamoyl group from carbamoyl phosphate (CP) to the N(epsilon) atom of ornithine (ORN) to produce L-citrulline. The polypeptide is Ornithine carbamoyltransferase (Mesorhizobium japonicum (strain LMG 29417 / CECT 9101 / MAFF 303099) (Mesorhizobium loti (strain MAFF 303099))).